A 96-amino-acid chain; its full sequence is Co-chaperonin GroES (96 aa).

This sequence belongs to the GroES chaperonin family. In terms of assembly, heptamer of 7 subunits arranged in a ring. Interacts with the chaperonin GroEL.

The protein resides in the cytoplasm. In terms of biological role, together with the chaperonin GroEL, plays an essential role in assisting protein folding. The GroEL-GroES system forms a nano-cage that allows encapsulation of the non-native substrate proteins and provides a physical environment optimized to promote and accelerate protein folding. GroES binds to the apical surface of the GroEL ring, thereby capping the opening of the GroEL channel. In Paraburkholderia phytofirmans (strain DSM 17436 / LMG 22146 / PsJN) (Burkholderia phytofirmans), this protein is Co-chaperonin GroES.